We begin with the raw amino-acid sequence, 156 residues long: Lipoprotein signal peptidase (156 aa).

Helical transmembrane passes span 52–72 and 85–105; these read ILEG…IGIV and FATA…DRIF. Active-site residues include D111 and D129. Residues 121–141 form a helical membrane-spanning segment; that stretch reads NFPIFNVADSALCVGVGILFL.

This sequence belongs to the peptidase A8 family.

The protein localises to the cell membrane. It carries out the reaction Release of signal peptides from bacterial membrane prolipoproteins. Hydrolyzes -Xaa-Yaa-Zaa-|-(S,diacylglyceryl)Cys-, in which Xaa is hydrophobic (preferably Leu), and Yaa (Ala or Ser) and Zaa (Gly or Ala) have small, neutral side chains.. It functions in the pathway protein modification; lipoprotein biosynthesis (signal peptide cleavage). Its function is as follows. This protein specifically catalyzes the removal of signal peptides from prolipoproteins. This chain is Lipoprotein signal peptidase, found in Halalkalibacterium halodurans (strain ATCC BAA-125 / DSM 18197 / FERM 7344 / JCM 9153 / C-125) (Bacillus halodurans).